The following is a 396-amino-acid chain: Acetate kinase (396 aa).

A Mg(2+)-binding site is contributed by Asn-7. Position 14 (Lys-14) interacts with ATP. Residue Arg-86 coordinates substrate. The Proton donor/acceptor role is filled by Asp-143. ATP is bound by residues 203-207 (HLGNG), 277-279 (DMR), and 325-329 (GIGEH). Residue Glu-380 participates in Mg(2+) binding.

The protein belongs to the acetokinase family. Homodimer. Mg(2+) is required as a cofactor. The cofactor is Mn(2+).

The protein localises to the cytoplasm. It carries out the reaction acetate + ATP = acetyl phosphate + ADP. It participates in metabolic intermediate biosynthesis; acetyl-CoA biosynthesis; acetyl-CoA from acetate: step 1/2. Catalyzes the formation of acetyl phosphate from acetate and ATP. Can also catalyze the reverse reaction. This chain is Acetate kinase, found in Sulfurovum sp. (strain NBC37-1).